The primary structure comprises 612 residues: Dihydroxy-acid dehydratase (612 aa).

Asp81 provides a ligand contact to Mg(2+). Position 122 (Cys122) interacts with [2Fe-2S] cluster. 2 residues coordinate Mg(2+): Asp123 and Lys124. At Lys124 the chain carries N6-carboxylysine. Cys195 contributes to the [2Fe-2S] cluster binding site. A Mg(2+)-binding site is contributed by Glu491. The active-site Proton acceptor is the Ser517.

Belongs to the IlvD/Edd family. Homodimer. The cofactor is [2Fe-2S] cluster. It depends on Mg(2+) as a cofactor.

It carries out the reaction (2R)-2,3-dihydroxy-3-methylbutanoate = 3-methyl-2-oxobutanoate + H2O. It catalyses the reaction (2R,3R)-2,3-dihydroxy-3-methylpentanoate = (S)-3-methyl-2-oxopentanoate + H2O. Its pathway is amino-acid biosynthesis; L-isoleucine biosynthesis; L-isoleucine from 2-oxobutanoate: step 3/4. It participates in amino-acid biosynthesis; L-valine biosynthesis; L-valine from pyruvate: step 3/4. In terms of biological role, functions in the biosynthesis of branched-chain amino acids. Catalyzes the dehydration of (2R,3R)-2,3-dihydroxy-3-methylpentanoate (2,3-dihydroxy-3-methylvalerate) into 2-oxo-3-methylpentanoate (2-oxo-3-methylvalerate) and of (2R)-2,3-dihydroxy-3-methylbutanoate (2,3-dihydroxyisovalerate) into 2-oxo-3-methylbutanoate (2-oxoisovalerate), the penultimate precursor to L-isoleucine and L-valine, respectively. The protein is Dihydroxy-acid dehydratase of Haemophilus influenzae (strain 86-028NP).